The following is a 440-amino-acid chain: Serine hydroxymethyltransferase (440 aa).

(6S)-5,6,7,8-tetrahydrofolate contacts are provided by residues Leu119 and 123–125 (GHL). Lys228 is subject to N6-(pyridoxal phosphate)lysine. 370-372 (SPF) is a binding site for (6S)-5,6,7,8-tetrahydrofolate.

Belongs to the SHMT family. In terms of assembly, homodimer. The cofactor is pyridoxal 5'-phosphate.

The protein localises to the cytoplasm. The enzyme catalyses (6R)-5,10-methylene-5,6,7,8-tetrahydrofolate + glycine + H2O = (6S)-5,6,7,8-tetrahydrofolate + L-serine. It functions in the pathway one-carbon metabolism; tetrahydrofolate interconversion. The protein operates within amino-acid biosynthesis; glycine biosynthesis; glycine from L-serine: step 1/1. Functionally, catalyzes the reversible interconversion of serine and glycine with tetrahydrofolate (THF) serving as the one-carbon carrier. This reaction serves as the major source of one-carbon groups required for the biosynthesis of purines, thymidylate, methionine, and other important biomolecules. Also exhibits THF-independent aldolase activity toward beta-hydroxyamino acids, producing glycine and aldehydes, via a retro-aldol mechanism. The polypeptide is Serine hydroxymethyltransferase (Chlorobaculum tepidum (strain ATCC 49652 / DSM 12025 / NBRC 103806 / TLS) (Chlorobium tepidum)).